A 200-amino-acid chain; its full sequence is Probable GTP-binding protein EngB (200 aa).

Positions 24-198 (EGMEVAFAGR…QAQLDEWLGI (175 aa)) constitute an EngB-type G domain. Residues 32 to 39 (GRSNVGKS), 59 to 63 (GRTQM), 77 to 80 (DLPG), 144 to 147 (TKSD), and 177 to 179 (FSA) each bind GTP. Mg(2+)-binding residues include serine 39 and threonine 61.

It belongs to the TRAFAC class TrmE-Era-EngA-EngB-Septin-like GTPase superfamily. EngB GTPase family. Mg(2+) serves as cofactor.

Its function is as follows. Necessary for normal cell division and for the maintenance of normal septation. The polypeptide is Probable GTP-binding protein EngB (Nitrosococcus oceani (strain ATCC 19707 / BCRC 17464 / JCM 30415 / NCIMB 11848 / C-107)).